A 782-amino-acid polypeptide reads, in one-letter code: HHIP-like protein 1 (782 aa).

The N-terminal stretch at 1 to 19 (MARARAGALLALWVLGAAA) is a signal peptide. Cystine bridges form between cysteine 181/cysteine 521, cysteine 185/cysteine 528, cysteine 399/cysteine 417, and cysteine 484/cysteine 584. N-linked (GlcNAc...) asparagine glycosylation occurs at asparagine 234. The tract at residues 604–666 (EKFIPKTRST…RRGRLNSASR (63 aa)) is disordered. Over residues 610–623 (TRSTPRPTARAPTR) the composition is skewed to low complexity. Over residues 632–642 (AAPPAPTPRPA) the composition is skewed to pro residues. The SRCR domain occupies 673 to 776 (VRLVRPAGLS…HDEDAGVVCS (104 aa)). Intrachain disulfides connect cysteine 700/cysteine 765, cysteine 713/cysteine 775, and cysteine 745/cysteine 755.

This sequence belongs to the HHIP family.

It is found in the secreted. The sequence is that of HHIP-like protein 1 (HHIPL1) from Homo sapiens (Human).